Consider the following 546-residue polypeptide: Chaperonin GroEL (546 aa).

ATP-binding positions include 30–33 (TLGP), lysine 51, 87–91 (DGTTT), glycine 415, 479–481 (NAA), and aspartate 495.

This sequence belongs to the chaperonin (HSP60) family. As to quaternary structure, forms a cylinder of 14 subunits composed of two heptameric rings stacked back-to-back. Interacts with the co-chaperonin GroES.

It localises to the cytoplasm. It carries out the reaction ATP + H2O + a folded polypeptide = ADP + phosphate + an unfolded polypeptide.. Its function is as follows. Together with its co-chaperonin GroES, plays an essential role in assisting protein folding. The GroEL-GroES system forms a nano-cage that allows encapsulation of the non-native substrate proteins and provides a physical environment optimized to promote and accelerate protein folding. This chain is Chaperonin GroEL, found in Xanthomonas axonopodis pv. citri (strain 306).